The sequence spans 290 residues: ATP synthase gamma chain (290 aa).

The protein belongs to the ATPase gamma chain family. As to quaternary structure, F-type ATPases have 2 components, CF(1) - the catalytic core - and CF(0) - the membrane proton channel. CF(1) has five subunits: alpha(3), beta(3), gamma(1), delta(1), epsilon(1). CF(0) has three main subunits: a, b and c.

The protein resides in the cell inner membrane. Functionally, produces ATP from ADP in the presence of a proton gradient across the membrane. The gamma chain is believed to be important in regulating ATPase activity and the flow of protons through the CF(0) complex. This is ATP synthase gamma chain from Dictyoglomus thermophilum (strain ATCC 35947 / DSM 3960 / H-6-12).